A 132-amino-acid chain; its full sequence is Large ribosomal subunit protein bL17 (132 aa).

Belongs to the bacterial ribosomal protein bL17 family. Part of the 50S ribosomal subunit. Contacts protein L32.

The chain is Large ribosomal subunit protein bL17 from Shewanella sediminis (strain HAW-EB3).